We begin with the raw amino-acid sequence, 311 residues long: Olfactory receptor 10G4 (311 aa).

Residues 1-23 lie on the Extracellular side of the membrane; sequence MSNASLVTAFILTGLPHAPGLDA. Asn3 carries N-linked (GlcNAc...) asparagine glycosylation. A helical transmembrane segment spans residues 24-44; sequence LLFGIFLVVYVLTVLGNLLIL. Topologically, residues 45 to 52 are cytoplasmic; it reads LVIRVDSH. The chain crosses the membrane as a helical span at residues 53 to 73; the sequence is LHTPMYYFLTNLSFIDMWFST. Residues 74–98 lie on the Extracellular side of the membrane; sequence VTVPKMLMTLVSPSGRAISFHSCVA. Cys96 and Cys188 form a disulfide bridge. Residues 99–119 form a helical membrane-spanning segment; sequence QLYFFHFLGSTECFLYTVMSY. At 120-138 the chain is on the cytoplasmic side; sequence DRYLAISYPLRYTSMMSGS. The chain crosses the membrane as a helical span at residues 139-159; sequence RCALLATGTWLSGSLHSAVQT. Residues 160 to 196 lie on the Extracellular side of the membrane; sequence ILTFHLPYCGPNQIQHYFCDAPPILKLACADTSANVM. A helical transmembrane segment spans residues 197–216; it reads VIFVDIGIVASGCFVLIVLS. Over 217-236 the chain is Cytoplasmic; it reads YVSIVCSILRIRTSDGRRRA. Residues 237–257 form a helical membrane-spanning segment; the sequence is FQTCASHCIVVLCFFVPCVVI. At 258 to 268 the chain is on the extracellular side; sequence YLRPGSMDAMD. The chain crosses the membrane as a helical span at residues 269-289; that stretch reads GVVAIFYTVLTPLLNPVVYTL. Residues 290–311 are Cytoplasmic-facing; sequence RNKEVKKAVLKLRDKVAHPQRK.

This sequence belongs to the G-protein coupled receptor 1 family.

It is found in the cell membrane. Odorant receptor. This chain is Olfactory receptor 10G4 (OR10G4), found in Homo sapiens (Human).